Reading from the N-terminus, the 1077-residue chain is Response regulator SSK1 (1077 aa).

The Response regulatory domain maps to 854-1000 (NVLIVEDNII…FLERKVMEWG (147 aa)). A 4-aspartylphosphate modification is found at Asp-903.

Belongs to the SSK1 family.

Its subcellular location is the cytoplasm. Functionally, two-domain response regulator protein in the two-component signal transduction system of the HOG1 pathway. Involved in multi-stress responses and is essential for conidiation, secondary metabolism, autophagy and endocyrosis. In addition, regulates mycelial growth, cell nucleus development, septum formation, and organelle development. Also regulates trap formation and thus plays a crucial role in pathogenicity. This Arthrobotrys oligospora (strain ATCC 24927 / CBS 115.81 / DSM 1491) (Nematode-trapping fungus) protein is Response regulator SSK1.